We begin with the raw amino-acid sequence, 315 residues long: Ribonuclease HII (315 aa).

In terms of domain architecture, RNase H type-2 spans 78 to 267; that stretch reads TLVAGVDEAG…VREALGLAPL (190 aa). A divalent metal cation contacts are provided by D84, E85, and D176. A disordered region spans residues 273–292; sequence APPPESAAEPGGEGAIAGIA. A compositionally biased stretch (low complexity) spans 278–292; it reads SAAEPGGEGAIAGIA.

It belongs to the RNase HII family. Mn(2+) is required as a cofactor. It depends on Mg(2+) as a cofactor.

Its subcellular location is the cytoplasm. The enzyme catalyses Endonucleolytic cleavage to 5'-phosphomonoester.. In terms of biological role, endonuclease that specifically degrades the RNA of RNA-DNA hybrids. This Anaeromyxobacter sp. (strain Fw109-5) protein is Ribonuclease HII.